The primary structure comprises 349 residues: Terpene cyclase rstn5 (349 aa).

The next 5 helical transmembrane spans lie at 4–24 (LTPL…WGVF), 81–101 (FMVQ…TEGA), 116–136 (GLFS…FWFV), 158–178 (VVPS…FDPF), and 181–201 (GLDL…CISL). Asn-222 carries N-linked (GlcNAc...) asparagine glycosylation. 3 helical membrane passes run 228-248 (VAVG…GLTG), 271-291 (LVLL…LLLA), and 309-329 (TLAV…AWAL).

The protein belongs to the membrane-bound ascI terpene cyclase family.

It localises to the membrane. It functions in the pathway antifungal biosynthesis. Cyclase; part of the gene cluster that mediates the biosynthesis of the tetrahydropyranyl antifungal agent restricticin that acts as an inhibitor of CYP51 and blocks the ergosterol biosynthesis. The highly reducing polyketide synthase rstn3, the short chain dehydrogenase rstn4, the cyclase rstn5, the FAD-dependent monooxygenase rstn6 and the enoylreductase rstn7 are required to generate the first stable intermediate desmethylrestrictinol. Rstn3 with rstn7 biosynthesize the first polyketide chain intermediate that is reduced by rstn4, followed by epoxidation by rstn6 before 6-endo cyclization via epoxide opening by rstn5 leads to desmethylrestrictinol. The methyltransferase rstn1 then catalyzes the C4 O-methylation of desmethylrestrictinol to produce restrictinol, and the nonribosomal peptide synthetase rstn8 catalyzes the C3 esterification of restrictinol with glycine that leads to restricticin. The polypeptide is Terpene cyclase rstn5 (Aspergillus nomiae NRRL (strain ATCC 15546 / NRRL 13137 / CBS 260.88 / M93)).